Reading from the N-terminus, the 632-residue chain is RNA-binding post-transcriptional regulator csx1 (632 aa).

Ser42 and Ser54 each carry phosphoserine; by MAPK sty1. 2 positions are modified to phosphoserine: Ser67 and Ser69. RRM domains are found at residues 85–167 (DTLW…WATG) and 182–261 (FSIF…VASP). A Phosphoserine; by MAPK sty1 modification is found at Ser291. Residues 297 to 369 (TTVFVGGLAS…SHIRLAWGHN (73 aa)) form the RRM 3 domain. The residue at position 455 (Ser455) is a Phosphoserine; by MAPK sty1. A disordered region spans residues 456–476 (PPPLSRSASISPTLSGSGSGL). The span at 466-476 (SPTLSGSGSGL) shows a compositional bias: low complexity.

In terms of assembly, interacts with cip1 and cip2.

The protein resides in the cytoplasm. Regulates global gene expression after oxidative stress. Interacts and stabilizes atf1 and pcr1 mRNAs after oxidative stress, thus controlling their turnover. In Schizosaccharomyces pombe (strain 972 / ATCC 24843) (Fission yeast), this protein is RNA-binding post-transcriptional regulator csx1 (csx1).